Consider the following 196-residue polypeptide: Chromophore lyase CpcT/CpeT (196 aa).

The protein belongs to the CpcT/CpeT biliprotein lyase family.

In terms of biological role, covalently attaches a chromophore to Cys residue(s) of phycobiliproteins. The polypeptide is Chromophore lyase CpcT/CpeT (Thermosynechococcus vestitus (strain NIES-2133 / IAM M-273 / BP-1)).